A 195-amino-acid polypeptide reads, in one-letter code: MKLMVLQLLLWHSALWTVHEATPLGPARSLPQSFLLKCLEQVRKIQADGAELQERLCAAHKLCHPEELMLLRHSLGIPQAPLSSCSSQSLQLTSCLNQLHGGLFLYQGLLQALAGISPELAPTLDTLQLDVTDFATNIWLQMEDLGAAPAVQPTQGAMPTFTSAFQRRAGGVLVASQLHRFLELAYRGLRYLAEP.

Positions 1 to 21 (MKLMVLQLLLWHSALWTVHEA) are cleaved as a signal peptide. 2 cysteine pairs are disulfide-bonded: Cys57–Cys63 and Cys85–Cys95. The O-linked (GalNAc...) threonine glycan is linked to Thr154.

It belongs to the IL-6 superfamily. In terms of assembly, monomer. In terms of processing, O-glycosylated.

The protein localises to the secreted. Its function is as follows. Granulocyte/macrophage colony-stimulating factors are cytokines that act in hematopoiesis by controlling the production, differentiation, and function of 2 related white cell populations of the blood, the granulocytes and the monocytes-macrophages. This CSF induces granulocytes. This is Granulocyte colony-stimulating factor (CSF3) from Bos taurus (Bovine).